Reading from the N-terminus, the 417-residue chain is Tryptophan synthase beta chain (417 aa).

Position 111 is an N6-(pyridoxal phosphate)lysine (Lys-111).

This sequence belongs to the TrpB family. Tetramer of two alpha and two beta chains. The cofactor is pyridoxal 5'-phosphate.

The catalysed reaction is (1S,2R)-1-C-(indol-3-yl)glycerol 3-phosphate + L-serine = D-glyceraldehyde 3-phosphate + L-tryptophan + H2O. It participates in amino-acid biosynthesis; L-tryptophan biosynthesis; L-tryptophan from chorismate: step 5/5. Its function is as follows. The beta subunit is responsible for the synthesis of L-tryptophan from indole and L-serine. The sequence is that of Tryptophan synthase beta chain from Fervidobacterium nodosum (strain ATCC 35602 / DSM 5306 / Rt17-B1).